The chain runs to 113 residues: UPF0482 protein YnfB (113 aa).

A signal peptide spans 1–28 (MKITLSKRIGLLAILLPCALALSTTVHA).

The protein belongs to the UPF0482 family.

The sequence is that of UPF0482 protein YnfB from Escherichia coli O8 (strain IAI1).